Reading from the N-terminus, the 445-residue chain is Chromosome partition protein MukF (445 aa).

Residues 213–241 (LSETSATLKELQDTLQAAGDELQTQILDI) form a leucine-zipper region.

The protein belongs to the MukF family. As to quaternary structure, interacts, and probably forms a ternary complex, with MukE and MukB via its C-terminal region. The complex formation is stimulated by calcium or magnesium. It is required for an interaction between MukE and MukB.

The protein resides in the cytoplasm. It localises to the nucleoid. Functionally, involved in chromosome condensation, segregation and cell cycle progression. May participate in facilitating chromosome segregation by condensation DNA from both sides of a centrally located replisome during cell division. Not required for mini-F plasmid partitioning. Probably acts via its interaction with MukB and MukE. Overexpression results in anucleate cells. It has a calcium binding activity. The protein is Chromosome partition protein MukF of Vibrio atlanticus (strain LGP32) (Vibrio splendidus (strain Mel32)).